The primary structure comprises 463 residues: Nucleobindin-1 (463 aa).

Positions 1–26 (MPPSGPQGTLLLLPLLLLLLLRAVLA) are cleaved as a signal peptide. Serine 86 carries the phosphoserine modification. A Phosphothreonine modification is found at threonine 148. A coiled-coil region spans residues 150 to 218 (EARDLELLIQ…QQRRHREHPK (69 aa)). Residues 172 to 218 (HHEEFKRYEMLKEHERRRYLESLGEEQRKEAERRLEEQQRRHREHPK) mediate DNA binding. Basic and acidic residues predominate over residues 193 to 210 (SLGEEQRKEAERRLEEQQ). Positions 193 to 221 (SLGEEQRKEAERRLEEQQRRHREHPKVNV) are disordered. The interval 228–321 (LKEVWEELDG…VTLGEFLAST (94 aa)) is binds to GNAI2 and GNAI3. 2 EF-hand domains span residues 240–275 (PNRFNPKTFFILHDINSDGVLDEQELEALFTKELEK) and 292–327 (ERLRMREHVMKNVDTNQDRLVTLGEFLASTQRKEFG). Ca(2+)-binding residues include aspartate 253, asparagine 255, aspartate 257, glutamate 264, aspartate 305, asparagine 307, aspartate 309, and glutamate 316. Positions 303–333 (NVDTNQDRLVTLGEFLASTQRKEFGDTGEGW) match the GBA motif. Residues 341-409 (AYTEEELRRF…KQQQQQQQQQ (69 aa)) adopt a coiled-coil conformation. The tract at residues 368 to 463 (LSQETEALGR…LPEVEVPQHL (96 aa)) is disordered. Residue serine 369 is modified to Phosphoserine. A compositionally biased stretch (basic and acidic residues) spans 439 to 463 (DQKEVDTSEKKLLERLPEVEVPQHL).

This sequence belongs to the nucleobindin family. As to quaternary structure, interacts (via GBA motif) with guanine nucleotide-binding protein G(i) alpha subunits GNAI1, GNAI2 and GNAI3 with higher affinity for GNAI1 and GNAI3 than for GNAI2. Preferentially interacts with inactive rather than active GNAI3. Interaction with GNAI3 is inhibited when NUCB1 binds calcium, probably due to a conformational change which renders the GBA motif inaccessible.

The protein localises to the golgi apparatus. The protein resides in the cis-Golgi network membrane. It localises to the cytoplasm. Its subcellular location is the secreted. Its function is as follows. Major calcium-binding protein of the Golgi which may have a role in calcium homeostasis. Acts as a non-receptor guanine nucleotide exchange factor which binds to and activates alpha subunits of guanine nucleotide-binding proteins (G proteins). The protein is Nucleobindin-1 (NUCB1) of Pongo abelii (Sumatran orangutan).